Consider the following 284-residue polypeptide: Adenylate kinase 1, chloroplastic (284 aa).

The transit peptide at 1–36 (MARLVRVARSSSLFGFGNRFYSTSAEASHASSPSPF) directs the protein to the chloroplast. 61–66 (GVGKGT) is an ATP binding site. An NMP region spans residues 81-110 (ATGDLVREELASSGPLSQKLSEIVNQGKLV). AMP-binding positions include Thr-82, Arg-87, 108-110 (KLV), 138-141 (GFPR), and Gln-145. Positions 174–222 (GRRTCSQCGKGFNVAHINLKGENGRPGISMDPLLPPHQCMSKLVTRADD) are LID. Arg-175 contributes to the ATP binding site. Positions 219 and 230 each coordinate AMP. Gly-258 is a binding site for ATP.

This sequence belongs to the adenylate kinase family. Monomer. In terms of tissue distribution, highly expressed in flowers and at lower levels in roots, leaves and stems.

Its subcellular location is the plastid. The protein localises to the chloroplast stroma. The enzyme catalyses AMP + ATP = 2 ADP. Functionally, catalyzes the reversible transfer of the terminal phosphate group between ATP and AMP. Plays an important role in cellular energy homeostasis, adenine nucleotide metabolism and plant growth. The polypeptide is Adenylate kinase 1, chloroplastic (ADK) (Arabidopsis thaliana (Mouse-ear cress)).